The sequence spans 166 residues: Signal peptidase complex catalytic subunit SEC11 (166 aa).

The Cytoplasmic portion of the chain corresponds to 1 to 9; it reads MNLRQQLTQ. Residues 10-31 form a helical; Signal-anchor for type II membrane protein membrane-spanning segment; the sequence is LLSIAYVFTSAFVAWKALSIVA. The Lumenal portion of the chain corresponds to 32–166; the sequence is NSHSPIVVVL…MGLSALLSGE (135 aa). Catalysis depends on charge relay system residues serine 44, histidine 83, and aspartate 108. Residues 152–163 are C-terminal short (CTS) helix; the sequence is ALLGFMGLSALL.

It belongs to the peptidase S26B family. Component of the signal peptidase complex (SPC) composed of a catalytic subunit SEC11 and three accessory subunits SPC1, SPC2 and SPC3. The complex induces a local thinning of the ER membrane which is used to measure the length of the signal peptide (SP) h-region of protein substrates. This ensures the selectivity of the complex towards h-regions shorter than 18-20 amino acids. SPC associates with the translocon complex.

The protein resides in the endoplasmic reticulum membrane. It catalyses the reaction Cleavage of hydrophobic, N-terminal signal or leader sequences from secreted and periplasmic proteins.. In terms of biological role, catalytic component of the signal peptidase complex (SPC) which catalyzes the cleavage of N-terminal signal sequences from nascent proteins as they are translocated into the lumen of the endoplasmic reticulum. Specifically cleaves N-terminal signal peptides that contain a hydrophobic alpha-helix (h-region) shorter than 18-20 amino acids. The chain is Signal peptidase complex catalytic subunit SEC11 (SEC11) from Clavispora lusitaniae (strain ATCC 42720) (Yeast).